Consider the following 207-residue polypeptide: 3-demethoxyubiquinol 3-hydroxylase (207 aa).

The Fe cation site is built by E56, E86, H89, E138, E170, and H173.

It belongs to the COQ7 family. Requires Fe cation as cofactor.

Its subcellular location is the cell membrane. The catalysed reaction is a 5-methoxy-2-methyl-3-(all-trans-polyprenyl)benzene-1,4-diol + AH2 + O2 = a 3-demethylubiquinol + A + H2O. Its pathway is cofactor biosynthesis; ubiquinone biosynthesis. Its function is as follows. Catalyzes the hydroxylation of 2-nonaprenyl-3-methyl-6-methoxy-1,4-benzoquinol during ubiquinone biosynthesis. The protein is 3-demethoxyubiquinol 3-hydroxylase of Cupriavidus taiwanensis (strain DSM 17343 / BCRC 17206 / CCUG 44338 / CIP 107171 / LMG 19424 / R1) (Ralstonia taiwanensis (strain LMG 19424)).